We begin with the raw amino-acid sequence, 114 residues long: Probable protein adenylyltransferase MntA (114 aa).

Positions 34–48 match the GSX(10)DXD motif motif; the sequence is GSRVKGKAKKYSDLD. Catalysis depends on residues D46 and D48. 5 residues coordinate Mg(2+): D46, D48, E67, E71, and D79.

Belongs to the MntA antitoxin family. Forms a complex with HepT, probably with a stoichiometry of 2:2. The cofactor is Mg(2+).

It carries out the reaction L-tyrosyl-[protein] + ATP = O-(5'-adenylyl)-L-tyrosyl-[protein] + diphosphate. The catalysed reaction is O-(5'-adenylyl)-L-tyrosyl-[protein] + ATP = O-[5'-(adenylyl-(5'-&gt;3')-adenylyl)]-L-tyrosyl-[protein] + diphosphate. Its function is as follows. Probable antitoxin component of a type VII toxin-antitoxin (TA) system. Neutralizes cognate toxic HEPN probably by di-AMPylation. A mixture of HepT and MntA binds nucleotides; the highest affinity is for TTP, ATP binds more tightly than ADP or AMP. This is Probable protein adenylyltransferase MntA (mntA) from Haemophilus influenzae (strain ATCC 51907 / DSM 11121 / KW20 / Rd).